Here is a 130-residue protein sequence, read N- to C-terminus: Sec-independent protein translocase protein TatB (130 aa).

Residues 1–21 traverse the membrane as a helical segment; it reads MFDIGFTELTLIFIIGLVVLG. Basic and acidic residues-rich tracts occupy residues 57-67 and 111-130; these read QDMQERMEKQM and PSDK…RRHD. The interval 57–130 is disordered; the sequence is QDMQERMEKQ…NHDQDSRRHD (74 aa).

This sequence belongs to the TatB family. In terms of assembly, the Tat system comprises two distinct complexes: a TatABC complex, containing multiple copies of TatA, TatB and TatC subunits, and a separate TatA complex, containing only TatA subunits. Substrates initially bind to the TatABC complex, which probably triggers association of the separate TatA complex to form the active translocon.

The protein resides in the cell inner membrane. Its function is as follows. Part of the twin-arginine translocation (Tat) system that transports large folded proteins containing a characteristic twin-arginine motif in their signal peptide across membranes. Together with TatC, TatB is part of a receptor directly interacting with Tat signal peptides. TatB may form an oligomeric binding site that transiently accommodates folded Tat precursor proteins before their translocation. The polypeptide is Sec-independent protein translocase protein TatB (Alcanivorax borkumensis (strain ATCC 700651 / DSM 11573 / NCIMB 13689 / SK2)).